The chain runs to 166 residues: Putative transmembrane protein encoded by LINC00477 (166 aa).

Residue N7 is glycosylated (N-linked (GlcNAc...) asparagine). Helical transmembrane passes span 15-35, 41-61, and 63-83; these read VSSF…FFLC, MTGC…VLGP, and PMGM…RFLG. Positions 127-166 are disordered; the sequence is LPVPHPPSPLSKCPQHPRPRRTKGPGLRKLWGPGPPFFPS.

Its subcellular location is the membrane. This is Putative transmembrane protein encoded by LINC00477 (LINC00477) from Homo sapiens (Human).